Reading from the N-terminus, the 844-residue chain is Proto-oncogene vav (844 aa).

Residues 1–119 form the Calponin-homology (CH) domain; that stretch reads MELWRQCTHW…YTLSALSWTP (119 aa). The DH domain maps to 193 to 372; that stretch reads KRCCCLREIQ…RDLAQCVNEV (180 aa). In terms of domain architecture, PH spans 401-503; sequence RPKIDGELKI…WMEQFEMAIS (103 aa). The Phorbol-ester/DAG-type zinc finger occupies 514 to 563; the sequence is GHDFQMFSFEETTSCKACQMLLRGTFYQGYRCQRCRAPAHKECLGRVPPC. The interval 567–589 is disordered; sequence GQDYSGTMKKDKPHRRAQDKKRN. Residues 591-659 form the SH3 1 domain; sequence LGLPKMEVCQ…PCNRVKPYVH (69 aa). The SH2 domain maps to 670 to 764; it reads WYAGPMERAG…SLDTTLQFPF (95 aa). Residues 781–841 enclose the SH3 2 domain; sequence KIFGTAKARY…PSNYVEEDYS (61 aa). 2 positions are modified to phosphotyrosine: Tyr-825 and Tyr-843.

Interacts with SHB. Interacts with APS, DOCK2, GRB2, GRB3, DOCK2, SLA, TEC and ZNF655/VIK. Interacts with SIAH2; without leading to its degradation. Associates with BLNK, PLCG1, GRB2 and NCK1 in a B-cell antigen receptor-dependent fashion. Interacts with CBLB; which inhibits tyrosine phosphorylation and down-regulates activity. May interact with CCPG1. Interacts with CLNK. Interacts with THEMIS2. Interacts with NEK3 and this interaction is prolactin-dependent. Interacts with ITK. Interacts with PTK2B/PYK2. Interacts with HCK. Interacts with PTK2B/PYK2. Interacts (via SH2 domain) with SYK. Interacts with ANKRD54. Interacts with CD6. Interacts with LCP2; this interaction plays a role in TCR-mediated cytokine production. Post-translationally, phosphorylated by FYN. Phosphorylated on tyrosine residues by HCK in response to IFNG and bacterial lipopolysaccharide (LPS).

Couples tyrosine kinase signals with the activation of the Rho/Rac GTPases, thus leading to cell differentiation and/or proliferation. This Bos taurus (Bovine) protein is Proto-oncogene vav (VAV1).